The following is a 136-amino-acid chain: MGKFMKPGKVVLVLAGRYSGRKAVIVKNIDDGTSDRPYSHALVAGIDRYPRKVTAAMGKKKIAKRSKIKSFVKVYNYNHLMPTRYSVDIPLDKTVVNKDVFRDPALKRKARREAKVKFEEKYKTGKNKWFFQKLRF.

A KOW domain is found at 5–40 (MKPGKVVLVLAGRYSGRKAVIVKNIDDGTSDRPYSH). N6-acetyllysine occurs at positions 27 and 93.

This sequence belongs to the eukaryotic ribosomal protein eL27 family. As to quaternary structure, component of the large ribosomal subunit. Interacts with RRP1B. Component of the large ribosomal subunit. Interacts with RRP1B. Interacts with DHX33.

It localises to the cytoplasm. The protein resides in the cytosol. Its subcellular location is the rough endoplasmic reticulum. Its function is as follows. Component of the large ribosomal subunit. Required for proper rRNA processing and maturation of 28S and 5.8S rRNAs. The chain is Large ribosomal subunit protein eL27 (RPL27) from Canis lupus familiaris (Dog).